Reading from the N-terminus, the 79-residue chain is Dolichyl-diphosphooligosaccharide--protein glycosyltransferase subunit TMEM258 (79 aa).

2 helical membrane passes run Leu18–Met38 and Phe55–Val75.

Belongs to the OST5 family. In terms of assembly, component of the oligosaccharyltransferase (OST) complex.

The protein resides in the membrane. Its pathway is protein modification; protein glycosylation. Its function is as follows. Subunit of the oligosaccharyl transferase (OST) complex that catalyzes the initial transfer of a defined glycan (Glc(3)Man(9)GlcNAc(2) in eukaryotes) from the lipid carrier dolichol-pyrophosphate to an asparagine residue within an Asn-X-Ser/Thr consensus motif in nascent polypeptide chains, the first step in protein N-glycosylation. N-glycosylation occurs cotranslationally and the complex associates with the Sec61 complex at the channel-forming translocon complex that mediates protein translocation across the endoplasmic reticulum (ER). All subunits are required for a maximal enzyme activity. The chain is Dolichyl-diphosphooligosaccharide--protein glycosyltransferase subunit TMEM258 from Caenorhabditis briggsae.